A 169-amino-acid polypeptide reads, in one-letter code: Anaerobic nitrite reductase NSHB3 (169 aa).

Residues 15 to 165 (RFTEEQEALV…LVAAIKQGMK (151 aa)) form the Globin domain. The Homodimerization motif lies at 48 to 52 (EVAPS). Residues Ser-58, Lys-72, His-76, Arg-106, Thr-110, and His-111 each coordinate heme b. A Homodimerization motif is present at residues 118–130 (DAHFEVAKFALLE).

Belongs to the plant globin family. As to quaternary structure, homodimer. Heme b serves as cofactor.

It is found in the cytoplasm. The protein resides in the nucleus. It catalyses the reaction Fe(III)-heme b-[protein] + nitric oxide + H2O = Fe(II)-heme b-[protein] + nitrite + 2 H(+). In terms of biological role, phytoglobin that reduces nitrite to nitric oxide under anoxic conditions (e.g. during flooding or in waterlogged soil). May not function as an oxygen storage or transport protein. Has an unusually high affinity for O(2) through an hexacoordinate heme iron because of a very low dissociation constant. The protein is Anaerobic nitrite reductase NSHB3 of Oryza sativa subsp. indica (Rice).